Here is a 242-residue protein sequence, read N- to C-terminus: NH(3)-dependent NAD(+) synthetase (242 aa).

Residue 27 to 34 participates in ATP binding; that stretch reads GISGGIDS. Position 33 (Asp33) interacts with Mg(2+). Arg109 contacts deamido-NAD(+). Thr129 contributes to the ATP binding site. Residue Glu134 participates in Mg(2+) binding. Residues Lys142 and Asp149 each coordinate deamido-NAD(+). The ATP site is built by Lys158 and Thr180. 231–232 is a deamido-NAD(+) binding site; sequence HK.

It belongs to the NAD synthetase family. As to quaternary structure, homodimer.

The enzyme catalyses deamido-NAD(+) + NH4(+) + ATP = AMP + diphosphate + NAD(+) + H(+). It participates in cofactor biosynthesis; NAD(+) biosynthesis; NAD(+) from deamido-NAD(+) (ammonia route): step 1/1. Catalyzes the ATP-dependent amidation of deamido-NAD to form NAD. Uses ammonia as a nitrogen source. The chain is NH(3)-dependent NAD(+) synthetase from Thermoplasma volcanium (strain ATCC 51530 / DSM 4299 / JCM 9571 / NBRC 15438 / GSS1).